The following is a 139-amino-acid chain: Peptide methionine sulfoxide reductase MsrB (139 aa).

In terms of domain architecture, MsrB spans 9–131 (TPSDNTEMTE…NSASLSFIDD (123 aa)). Zn(2+) is bound by residues C48, C51, C97, and C100. The Nucleophile role is filled by C120.

This sequence belongs to the MsrB Met sulfoxide reductase family. Zn(2+) is required as a cofactor.

The enzyme catalyses L-methionyl-[protein] + [thioredoxin]-disulfide + H2O = L-methionyl-(R)-S-oxide-[protein] + [thioredoxin]-dithiol. The polypeptide is Peptide methionine sulfoxide reductase MsrB (Pectobacterium atrosepticum (strain SCRI 1043 / ATCC BAA-672) (Erwinia carotovora subsp. atroseptica)).